A 280-amino-acid chain; its full sequence is Lacto-N-neotetraose biosynthesis glycosyltransferase LgtE (280 aa).

This sequence belongs to the glycosyltransferase 25 family.

It functions in the pathway glycan metabolism; lacto-N-neotetraose biosynthesis. It participates in bacterial outer membrane biogenesis; lipooligosaccharide biosynthesis. Functionally, adds the first galactose to the lacto-N-tetraose chain in lipooligosaccharide (LOS). This chain is Lacto-N-neotetraose biosynthesis glycosyltransferase LgtE (lgtE), found in Neisseria meningitidis serogroup B (strain ATCC BAA-335 / MC58).